The primary structure comprises 380 residues: MAPTMRKTHPLLKIINNSLIDLPTPSNISYLWNYGSLLGLCLMTQILTGLFLAMHYTADTATAFSSLAHICRDVNYGWLMRNIHANGASFFFICIYLHIGRGIYYGSYLFKETWNIGVILLLLVMATAFVGYVLPWGQMSFWGATVITNILSAIPYIGNNLVQWVWGGFAVDNATLTRFFTFHFLLPFLIAGTSMLHLLFLHETGSNNPTGLNSNSDKIPFHPYFSYKDTFGFMIMLAALALLSTTNPNLMSDPENFTPANPLVTPPHIKPEWYFLFAYAILRSIPNKLGGVLALLFSIMILMLIPSLHTAKQRSMMFRPLSQLMFWSIIANTLVLTWIGGQPVEDPFILIGQISSALYFILFLVLLPLTNWSDNKMLNL.

The next 4 helical transmembrane spans lie at 34 to 54 (YGSLLGLCLMTQILTGLFLAM), 78 to 99 (WLMRNIHANGASFFFICIYLHI), 114 to 134 (WNIGVILLLLVMATAFVGYVL), and 179 to 199 (FFTFHFLLPFLIAGTSMLHLL). The heme b site is built by His84 and His98. Heme b contacts are provided by His183 and His197. His202 provides a ligand contact to a ubiquinone. A run of 4 helical transmembrane segments spans residues 227–247 (YKDTFGFMIMLAALALLSTTN), 289–309 (LGGVLALLFSIMILMLIPSLH), 321–341 (LSQLMFWSIIANTLVLTWIGG), and 348–368 (FILIGQISSALYFILFLVLLP).

This sequence belongs to the cytochrome b family. As to quaternary structure, the cytochrome bc1 complex contains 3 respiratory subunits (MT-CYB, CYC1 and UQCRFS1), 2 core proteins (UQCRC1 and UQCRC2) and probably 6 low-molecular weight proteins. Requires heme b as cofactor.

It localises to the mitochondrion inner membrane. Its function is as follows. Component of the ubiquinol-cytochrome c reductase complex (complex III or cytochrome b-c1 complex) that is part of the mitochondrial respiratory chain. The b-c1 complex mediates electron transfer from ubiquinol to cytochrome c. Contributes to the generation of a proton gradient across the mitochondrial membrane that is then used for ATP synthesis. The sequence is that of Cytochrome b (mt-cyb) from Typhlonectes natans (Rubber eel).